A 93-amino-acid polypeptide reads, in one-letter code: NADH-dependent phenylglyoxylate dehydrogenase subunit delta (93 aa).

2 consecutive 4Fe-4S ferredoxin-type domains span residues 39 to 68 (MRPV…EHAA) and 66 to 93 (HAAW…RRSR).

In terms of assembly, dimer of heteropentamers composed of an alpha (PadG), a beta (PadI), a gamma (PadE), a delta (PadF) and an epsilon (PadH) subunit. Requires [4Fe-4S] cluster as cofactor.

The enzyme catalyses phenylglyoxylate + NAD(+) + CoA = benzoyl-CoA + CO2 + NADH. With respect to regulation, activated by magnesium ions and thiamine diphosphate. In terms of biological role, involved in the anaerobic metabolism of phenylalanine and phenylacetate. Catalyzes the oxidative decarboxylation of phenylglyoxylate to benzoyl-CoA and CO(2). It can also react slowly with 2-oxo-3-methylbutanoate and use different electron acceptors such as benzyl viologen, methyl viologen, FAD or FMN, but NAD seems to be the physiological electron acceptor. Also catalyzes an isotope exchange between CO(2) and the carboxyl group which proves partial or complete reversibility of the oxidative decarboxylation reaction. The chain is NADH-dependent phenylglyoxylate dehydrogenase subunit delta (padF) from Aromatoleum evansii (Azoarcus evansii).